The chain runs to 773 residues: Jhy protein homolog (773 aa).

Disordered regions lie at residues 1 to 247 (MSHS…SKQY), 325 to 373 (WSQY…KSLV), 496 to 526 (KKHP…QPKL), 596 to 615 (ESES…KISR), and 713 to 743 (AKTI…KEDT). The segment covering 10–28 (VSIQSPVHHTNIKVQSTEP) has biased composition (polar residues). The segment covering 29-43 (SFKKEDLHLISKDSL) has biased composition (basic and acidic residues). Residues 48-57 (ESPTQKIKSQ) show a composition bias toward polar residues. Acidic residues predominate over residues 59 to 84 (DLEDQIQDNDMEPDSLEEENLSETEE). Over residues 112-134 (PTEDKYSHIRYDPNWKSKKEEGK) the composition is skewed to basic and acidic residues. The segment covering 145–154 (VDSSTENLTL) has biased composition (polar residues). Over residues 216–229 (SNLSRYLKSSSSRS) the composition is skewed to low complexity. Over residues 334-351 (SSGPRGQSSETTNGQQPS) the composition is skewed to polar residues. Positions 353–369 (KPAKHKIRKQRRHRHGP) are enriched in basic residues. Over residues 500-516 (SGSQKGSQSVSNINRQA) the composition is skewed to polar residues. Over residues 598 to 610 (ESQLSSERSQRNQ) the composition is skewed to low complexity. Residues 728 to 743 (ASKEKKTPTHAGKEDT) are compositionally biased toward basic and acidic residues.

Its function is as follows. Required for the normal development of cilia in brain ependymal cells lining the ventricular surfaces. The chain is Jhy protein homolog (JHY) from Bos taurus (Bovine).